Here is a 297-residue protein sequence, read N- to C-terminus: uncharacterized protein (297 aa).

2 helical membrane passes run 17–37 and 48–68; these read LALS…KEIF and TISG…GYSI. Residues 17–196 enclose the PNPLA domain; sequence LALSGGGFYG…TLNYPITLFD (180 aa). Positions 21–26 match the GXGXXG motif; that stretch reads GGGFYG. The GXSXG motif lies at 51 to 55; it reads GVSVG. S53 acts as the Nucleophile in catalysis. N122 is a glycosylation site (N-linked (GlcNAc...) asparagine; by host). D183 functions as the Proton acceptor in the catalytic mechanism. A DGA/G motif is present at residues 183–185; sequence DGG. N239 carries an N-linked (GlcNAc...) asparagine; by host glycan.

Its subcellular location is the membrane. Functionally, probable lipid hydrolase. This is an uncharacterized protein from Acanthamoeba polyphaga mimivirus (APMV).